The sequence spans 220 residues: Guanylate kinase (220 aa).

Residues 11–190 form the Guanylate kinase-like domain; it reads GVLFVLSSPS…CYGEVMAILR (180 aa). 18–25 contributes to the ATP binding site; sequence SPSGAGKT.

The protein belongs to the guanylate kinase family.

It is found in the cytoplasm. The enzyme catalyses GMP + ATP = GDP + ADP. Its function is as follows. Essential for recycling GMP and indirectly, cGMP. The polypeptide is Guanylate kinase (Sphingopyxis alaskensis (strain DSM 13593 / LMG 18877 / RB2256) (Sphingomonas alaskensis)).